A 279-amino-acid chain; its full sequence is Phosphonates import ATP-binding protein PhnC 2 (279 aa).

An ABC transporter domain is found at 10-253 (LSLKGVSVRY…VARNLYAKQS (244 aa)). 43-50 (GASGAGKS) serves as a coordination point for ATP. Positions 253–262 (SNASNTSAST) are enriched in low complexity. A disordered region spans residues 253–279 (SNASNTSASTDSPRTLQSSQTKELLPC). Polar residues predominate over residues 263-279 (DSPRTLQSSQTKELLPC).

This sequence belongs to the ABC transporter superfamily. Phosphonates importer (TC 3.A.1.9.1) family. In terms of assembly, the complex is composed of two ATP-binding proteins (PhnC), two transmembrane proteins (PhnE) and a solute-binding protein (PhnD).

Its subcellular location is the cell inner membrane. The enzyme catalyses phosphonate(out) + ATP + H2O = phosphonate(in) + ADP + phosphate + H(+). Part of the ABC transporter complex PhnCDE involved in phosphonates import. Responsible for energy coupling to the transport system. In Cupriavidus metallidurans (strain ATCC 43123 / DSM 2839 / NBRC 102507 / CH34) (Ralstonia metallidurans), this protein is Phosphonates import ATP-binding protein PhnC 2.